The primary structure comprises 284 residues: L-ribulose-5-phosphate 3-epimerase UlaE (284 aa).

Belongs to the L-ribulose-5-phosphate 3-epimerase family.

The enzyme catalyses L-ribulose 5-phosphate = L-xylulose 5-phosphate. It participates in cofactor degradation; L-ascorbate degradation; D-xylulose 5-phosphate from L-ascorbate: step 3/4. Its function is as follows. Catalyzes the isomerization of L-xylulose-5-phosphate to L-ribulose-5-phosphate. Is involved in the anaerobic L-ascorbate utilization. This Escherichia coli (strain 55989 / EAEC) protein is L-ribulose-5-phosphate 3-epimerase UlaE.